We begin with the raw amino-acid sequence, 334 residues long: ADP-L-glycero-D-manno-heptose-6-epimerase (334 aa).

NADP(+)-binding positions include 11–12 (FI), 32–33 (DN), lysine 39, lysine 54, 77–81 (QGACS), and asparagine 94. Catalysis depends on tyrosine 141, which acts as the Proton acceptor. Lysine 145 provides a ligand contact to NADP(+). Residue asparagine 171 participates in substrate binding. NADP(+) is bound by residues valine 172 and lysine 180. Residue lysine 180 is the Proton acceptor of the active site. Substrate-binding positions include arginine 182, histidine 189, 203 to 206 (FGSN), arginine 216, and tyrosine 295.

This sequence belongs to the NAD(P)-dependent epimerase/dehydratase family. HldD subfamily. As to quaternary structure, homopentamer. It depends on NADP(+) as a cofactor.

The catalysed reaction is ADP-D-glycero-beta-D-manno-heptose = ADP-L-glycero-beta-D-manno-heptose. It participates in nucleotide-sugar biosynthesis; ADP-L-glycero-beta-D-manno-heptose biosynthesis; ADP-L-glycero-beta-D-manno-heptose from D-glycero-beta-D-manno-heptose 7-phosphate: step 4/4. The protein operates within bacterial outer membrane biogenesis; LOS core biosynthesis. Functionally, catalyzes the interconversion between ADP-D-glycero-beta-D-manno-heptose and ADP-L-glycero-beta-D-manno-heptose via an epimerization at carbon 6 of the heptose. The sequence is that of ADP-L-glycero-D-manno-heptose-6-epimerase from Neisseria meningitidis serogroup B (strain ATCC BAA-335 / MC58).